The primary structure comprises 2506 residues: Zinc finger protein 462 (2506 aa).

C2H2-type zinc fingers lie at residues 4 to 27 (LQCD…QDVH), 108 to 131 (FQCK…RKVH), and 162 to 185 (FSCQ…KMYH). A Glycyl lysine isopeptide (Lys-Gly) (interchain with G-Cter in SUMO1); alternate cross-link involves residue K20. Residue K20 forms a Glycyl lysine isopeptide (Lys-Gly) (interchain with G-Cter in SUMO2); alternate linkage. The interval 215–241 (PCKELPAEVVERSILESMVKPLTKSRG) is interaction with PBX1. Glycyl lysine isopeptide (Lys-Gly) (interchain with G-Cter in SUMO2) cross-links involve residues K234 and K271. The segment at 280 to 299 (QEGTNLPDVPNKSAPSPTSN) is disordered. Residues S292 and S309 are each glycosylated (O-linked (GlcNAc6P) serine). Glycyl lysine isopeptide (Lys-Gly) (interchain with G-Cter in SUMO2) cross-links involve residues K337, K347, and K349. The segment at 337-356 (KFSPMSYPQMKPKSPHNSGL) is disordered. Residues S350 and S354 each carry the phosphoserine modification. K428 is covalently cross-linked (Glycyl lysine isopeptide (Lys-Gly) (interchain with G-Cter in SUMO2)). C2H2-type zinc fingers lie at residues 439–462 (FQCP…ENIH) and 470–492 (YKCD…KQCH). A Glycyl lysine isopeptide (Lys-Gly) (interchain with G-Cter in SUMO2) cross-link involves residue K484. Residues 535-596 (DPLQQQQPPQ…QPQPPTQAAP (62 aa)) form a disordered region. Pro residues predominate over residues 542–593 (PPQPPPPPPPPPPSQPQPLQQPQPPQLQPPHQVPPQPQTQPPPTQQPQPPTQ). A C2H2-type 6 zinc finger spans residues 600–623 (YKCTMCNYSTTTLKGLRVHQQHKH). Glycyl lysine isopeptide (Lys-Gly) (interchain with G-Cter in SUMO2) cross-links involve residues K631, K657, and K668. Residues 636–661 (PSSLPLENETDSHPSSSNTVKKSQTS) are disordered. Over residues 648 to 661 (HPSSSNTVKKSQTS) the composition is skewed to polar residues. Phosphoserine is present on S688. Residues K706 and D849 each participate in a glycyl lysine isopeptide (Lys-Gly) (interchain with G-Cter in SUMO2) cross-link. 3 C2H2-type zinc fingers span residues 843–866 (YYCK…QRMH), 886–908 (YRCL…YGEH), and 925–948 (YRCR…QRMH). A Glycyl lysine isopeptide (Lys-Gly) (interchain with G-Cter in SUMO2) cross-link involves residue K986. The C2H2-type 10 zinc-finger motif lies at 1030 to 1053 (YDCDVCSFASPNMHSVLVHYQKKH). S1090 bears the Phosphoserine mark. Residue K1135 forms a Glycyl lysine isopeptide (Lys-Gly) (interchain with G-Cter in SUMO2) linkage. The interval 1157–1186 (MRGVEGPQGSPRPPAPIQQLNRSSSERDGP) is disordered. S1166 is modified (phosphoserine). Glycyl lysine isopeptide (Lys-Gly) (interchain with G-Cter in SUMO2) cross-links involve residues K1206, K1214, K1220, and K1243. 2 consecutive C2H2-type zinc fingers follow at residues 1265-1288 (LKCR…KKDH) and 1470-1493 (YQCT…GKKH). K1499 is covalently cross-linked (Glycyl lysine isopeptide (Lys-Gly) (interchain with G-Cter in SUMO2)). Residues 1515–1538 (YKCRHCPYINTRIHGVLTHYQKRH) form a C2H2-type 13 zinc finger. Residues K1571 and K1591 each participate in a glycyl lysine isopeptide (Lys-Gly) (interchain with G-Cter in SUMO2) cross-link. 3 C2H2-type zinc fingers span residues 1577–1600 (YRCK…EKYH), 1660–1683 (FRCQ…RIKH), and 1697–1720 (FKCA…QKRH). Glycyl lysine isopeptide (Lys-Gly) (interchain with G-Cter in SUMO2) cross-links involve residues K1698 and K1780. The C2H2-type 17 zinc-finger motif lies at 1892 to 1914 (YQCKHCDSKLQSTAELTSHLNIH). Residue K1946 forms a Glycyl lysine isopeptide (Lys-Gly) (interchain with G-Cter in SUMO2) linkage. A C2H2-type 18; degenerate zinc finger spans residues 1968–1992 (YKCKFCVEVHPTLRAICNHLRKHVQ). Position 2004 is an N6-methyllysine (K2004). 3 C2H2-type zinc fingers span residues 2025–2048 (YSCQ…QTHH), 2054–2077 (FRCK…LKAH), and 2083–2106 (YKCS…LKVH). A Glycyl lysine isopeptide (Lys-Gly) (interchain with G-Cter in SUMO2) cross-link involves residue K2104. The disordered stretch occupies residues 2122–2152 (SSHSHHSSQKATPAEEVEDSNDSSYSEPPDV). The span at 2143–2152 (DSSYSEPPDV) shows a compositional bias: polar residues. S2172 and S2177 each carry phosphoserine. C2H2-type zinc fingers lie at residues 2191–2214 (LHCE…RDKH), 2220–2243 (FKCK…EAGH), and 2254–2276 (LRCP…IVLH). Residue K2293 forms a Glycyl lysine isopeptide (Lys-Gly) (interchain with G-Cter in SUMO2) linkage. 2 consecutive C2H2-type zinc fingers follow at residues 2300–2322 (FRCD…IEKH) and 2328–2351 (YKCQ…RDEH). The disordered stretch occupies residues 2371-2396 (MKEKMESSSSDDEDKEEEMNSKAEDR). The segment at 2414 to 2436 (FPCEFCGRAFSQGSEWERHVLRH) adopts a C2H2-type 27 zinc-finger fold. Residues K2444 and K2504 each participate in a glycyl lysine isopeptide (Lys-Gly) (interchain with G-Cter in SUMO2) cross-link.

Interacts with PBX1; this interaction prevents PBX1-HOXA9 heterodimer from forming and binding to DNA. In terms of processing, O-GlcNAcylated with O-GlcNAc-6-phosphate.

The protein resides in the nucleus. Functionally, zinc finger nuclear factor involved in transcription by regulating chromatin structure and organization. Involved in the pluripotency and differentiation of embryonic stem cells by regulating SOX2, POU5F1/OCT4, and NANOG. By binding PBX1, prevents the heterodimerization of PBX1 and HOXA9 and their binding to DNA. Regulates neuronal development and neural cell differentiation. In Homo sapiens (Human), this protein is Zinc finger protein 462.